The primary structure comprises 212 residues: Acyl-homoserine-lactone synthase (212 aa).

It belongs to the autoinducer synthase family.

The catalysed reaction is a fatty acyl-[ACP] + S-adenosyl-L-methionine = an N-acyl-L-homoserine lactone + S-methyl-5'-thioadenosine + holo-[ACP] + H(+). Its function is as follows. Required for the synthesis of OHHL (N-(3-oxohexanoyl)-L-homoserine lactone), an autoinducer molecule which binds to the EchR transcriptional regulator. In Dickeya chrysanthemi (Pectobacterium chrysanthemi), this protein is Acyl-homoserine-lactone synthase (echI).